The following is a 255-amino-acid chain: 4-diphosphocytidyl-2-C-methyl-D-erythritol kinase (255 aa).

The active site involves K6. P95–S105 provides a ligand contact to ATP. D137 is an active-site residue.

This sequence belongs to the GHMP kinase family. IspE subfamily.

The catalysed reaction is 4-CDP-2-C-methyl-D-erythritol + ATP = 4-CDP-2-C-methyl-D-erythritol 2-phosphate + ADP + H(+). It functions in the pathway isoprenoid biosynthesis; isopentenyl diphosphate biosynthesis via DXP pathway; isopentenyl diphosphate from 1-deoxy-D-xylulose 5-phosphate: step 3/6. Catalyzes the phosphorylation of the position 2 hydroxy group of 4-diphosphocytidyl-2C-methyl-D-erythritol. This Campylobacter jejuni subsp. doylei (strain ATCC BAA-1458 / RM4099 / 269.97) protein is 4-diphosphocytidyl-2-C-methyl-D-erythritol kinase.